A 669-amino-acid chain; its full sequence is MEGNKLEEQDSSPPQSTPGLMKGNKREEQGLGPEPAAPQQPTAEEEALIEFHRSYRELFEFFCNNTTIHGAIRLVCSQHNRMKTAFWAVLWLCTFGMMYWQFGLLFGEYFSYPVSLNINLNSDKLVFPAVTICTLNPYRYPEIKEELEELDRITEQTLFDLYKYSSFTTLVAGSRSRRDLRGTLPHPLQRLRVPPPPHGARRARSVASSLRDNNPQVDWKDWKIGFQLCNQNKSDCFYQTYSSGVDAVREWYRFHYINILSRLPETLPSLEEDTLGNFIFACRFNQVSCNQANYSHFHHPMYGNCYTFNDKNNSNLWMSSMPGINNGLSLMLRAEQNDFIPLLSTVTGARVMVHGQDEPAFMDDGGFNLRPGVETSISMRKETLDRLGGDYGDCTKNGSDVPVENLYPSKYTQQVCIHSCFQESMIKECGCAYIFYPRPQNVEYCDYRKHSSWGYCYYKLQVDFSSDHLGCFTKCRKPCSVTSYQLSAGYSRWPSVTSQEWVFQMLSRQNNYTVNNKRNGVAKVNIFFKELNYKTNSESPSVTMVTLLSNLGSQWSLWFGSSVLSVVEMAELVFDLLVIMFLMLLRRFRSRYWSPGRGGRGAQEVASTLASSPPSHFCPHPMSLSLSQPGPAPSPALTAPPPAYATLGPRPSPGGSAGASSSTCPLGGP.

The tract at residues 1 to 43 (MEGNKLEEQDSSPPQSTPGLMKGNKREEQGLGPEPAAPQQPTA) is disordered. At 1–85 (MEGNKLEEQD…CSQHNRMKTA (85 aa)) the chain is on the cytoplasmic side. Residues 33–42 (PEPAAPQQPT) are compositionally biased toward low complexity. The helical transmembrane segment at 86 to 106 (FWAVLWLCTFGMMYWQFGLLF) threads the bilayer. At 107-562 (GEYFSYPVSL…SQWSLWFGSS (456 aa)) the chain is on the extracellular side. Disulfide bonds link Cys-133-Cys-305, Cys-229-Cys-236, Cys-282-Cys-289, Cys-394-Cys-479, Cys-416-Cys-456, Cys-416-Cys-475, Cys-420-Cys-471, Cys-429-Cys-456, Cys-429-Cys-479, and Cys-431-Cys-445. Residues 175–243 (RSRRDLRGTL…SDCFYQTYSS (69 aa)) form a gating release of inhibition by proteolysis (GRIP); protease-sensitive region that is responsible for the proteolytic activation of the channel region. The helical transmembrane segment at 563-583 (VLSVVEMAELVFDLLVIMFLM) threads the bilayer. The Cytoplasmic portion of the chain corresponds to 584-669 (LLRRFRSRYW…SSSTCPLGGP (86 aa)). The segment at 620 to 669 (HPMSLSLSQPGPAPSPALTAPPPAYATLGPRPSPGGSAGASSSTCPLGGP) is disordered. Over residues 630–643 (GPAPSPALTAPPPA) the composition is skewed to pro residues. The PY motif; recruits WW domain-containing proteins and is thereby required for ubiquitination and inhibition of the channel by NEDD4 and NEDD4L motif lies at 640 to 644 (PPPAY).

The protein belongs to the amiloride-sensitive sodium channel (TC 1.A.6) family. SCNN1A subfamily. As to quaternary structure, heterotrimer; containing an alpha/SCNN1A, a beta/SCNN1B and a gamma/SCNN1G subunit. Interacts with WWP1 (via WW domains). Interacts with WWP2 (via WW domains); inhibits the channel. Interacts with BPIFA1; the interaction is indirect via SCNN1B and inhibits the proteolytic processing of SCNN1A and SCNN1G and the activation of ENaC. Interacts with the full-length immature form of PCSK9 (pro-PCSK9); inhibits ENaC by promoting its proteasomal degradation. Ubiquitinated. Can be ubiquitinated at multiple sites and undergo monoubiquitination and polyubiquitination. Ubiquitination by NEDD4 or NEDD4L inhibits the ENaC channel through endocytosis, intracellular retention and degradation of its individual subunits. In terms of processing, ENaC is activated through the proteolytic maturation of its subunits. Furin cleaves the SCNN1A subunit, which results in a stepwise increase in the open probability of the channel due to the release of an inhibitory tract. BPIFA1, which is recruited by the SCNN1B subunit, prevents the proteolytic activation of ENaC. Post-translationally, N-glycosylated. As to expression, expressed in the female reproductive tract, from the fimbrial end of the fallopian tube to the endometrium (at protein level). Expressed in kidney (at protein level). In the respiratory tract, expressed in the bronchial epithelium (at protein level). Highly expressed in lung. Detected at intermediate levels in pancreas and liver, and at low levels in heart and placenta. in skin, expressed in keratinocytes, melanocytes and Merkel cells of the epidermal sub-layers, stratum basale, stratum spinosum and stratum granulosum (at protein level). Expressed in the outer root sheath of the hair follicles (at protein level). Detected in both peripheral and central cells of the sebaceous gland (at protein level). Expressed by eccrine sweat glands (at protein level). In skin, also expressed by arrector pili muscle cells and intradermal adipocytes. Isoform 1 and isoform 2 predominate in all tissues. Detected in lung and heart.

It is found in the apical cell membrane. The protein localises to the cell projection. Its subcellular location is the cilium. It localises to the cytoplasmic granule. The protein resides in the cytoplasm. It is found in the cytoplasmic vesicle. The protein localises to the secretory vesicle. Its subcellular location is the acrosome. It localises to the flagellum. The catalysed reaction is Na(+)(in) = Na(+)(out). Originally identified and characterized by its inhibition by the diuretic drug amiloride. Inhibited by phenamil. Functionally, this is one of the three pore-forming subunits of the heterotrimeric epithelial sodium channel (ENaC), a critical regulator of sodium balance and fluid homeostasis. ENaC operates in epithelial tissues, where it mediates the electrodiffusion of sodium ions from extracellular fluid through the apical membrane of cells, with water following osmotically. It plays a key role in maintaining sodium homeostasis through electrogenic sodium reabsorption in the kidneys. Additionally, ENaC is essential for airway surface liquid homeostasis, which is crucial for proper mucus clearance. Its function is as follows. Not functional. The sequence is that of Epithelial sodium channel subunit alpha from Homo sapiens (Human).